The following is a 185-amino-acid chain: Elongation factor P (185 aa).

The protein belongs to the elongation factor P family.

It localises to the cytoplasm. It functions in the pathway protein biosynthesis; polypeptide chain elongation. Its function is as follows. Involved in peptide bond synthesis. Stimulates efficient translation and peptide-bond synthesis on native or reconstituted 70S ribosomes in vitro. Probably functions indirectly by altering the affinity of the ribosome for aminoacyl-tRNA, thus increasing their reactivity as acceptors for peptidyl transferase. The sequence is that of Elongation factor P from Mesoplasma florum (strain ATCC 33453 / NBRC 100688 / NCTC 11704 / L1) (Acholeplasma florum).